A 338-amino-acid chain; its full sequence is UPF0284 protein PAE0372 (338 aa).

Belongs to the UPF0284 family.

This chain is UPF0284 protein PAE0372, found in Pyrobaculum aerophilum (strain ATCC 51768 / DSM 7523 / JCM 9630 / CIP 104966 / NBRC 100827 / IM2).